The sequence spans 405 residues: L-carnitine CoA-transferase (405 aa).

CoA contacts are provided by lysine 97 and arginine 104. Aspartate 169 serves as the catalytic Nucleophile.

It belongs to the CoA-transferase III family. CaiB subfamily. As to quaternary structure, homodimer.

The protein resides in the cytoplasm. It carries out the reaction crotonobetainyl-CoA + (R)-carnitine = crotonobetaine + (R)-carnitinyl-CoA. It catalyses the reaction 4-(trimethylamino)butanoyl-CoA + (R)-carnitine = (R)-carnitinyl-CoA + 4-(trimethylamino)butanoate. The protein operates within amine and polyamine metabolism; carnitine metabolism. Its function is as follows. Catalyzes the reversible transfer of the CoA moiety from gamma-butyrobetainyl-CoA to L-carnitine to generate L-carnitinyl-CoA and gamma-butyrobetaine. Is also able to catalyze the reversible transfer of the CoA moiety from gamma-butyrobetainyl-CoA or L-carnitinyl-CoA to crotonobetaine to generate crotonobetainyl-CoA. The chain is L-carnitine CoA-transferase from Escherichia coli O7:K1 (strain IAI39 / ExPEC).